Here is a 209-residue protein sequence, read N- to C-terminus: Heat shock protein beta-1 (209 aa).

The residue at position 12 (Arg-12) is an Omega-N-methylarginine. Ser-13 is modified (phosphoserine). Ser-15 carries the phosphoserine; by MAPKAPK2 and MAPKAPK3 modification. Position 27 is a phosphoserine (Ser-27). The segment at 74–209 (APAYSRALSR…AGKSEQSGAK (136 aa)) is interaction with TGFB1I1. One can recognise a sHSP domain in the interval 80 to 188 (ALSRQLSSGV…QSAEITIPVT (109 aa)). 2 positions are modified to phosphoserine; by MAPKAPK2, MAPKAPK3 and MAPKAPK5: Ser-82 and Ser-86. Phosphoserine is present on residues Ser-87, Ser-90, and Ser-102. The residue at position 127 (Lys-127) is an N6-acetyllysine. Phosphothreonine is present on Thr-178. A phosphoserine mark is found at Ser-180 and Ser-203.

This sequence belongs to the small heat shock protein (HSP20) family. Homooligomer. Homodimer; becomes monomeric upon activation. Heterooligomer; with HSPB6. Associates with alpha- and beta-tubulin. Interacts with TGFB1I1. Interacts with CRYAB. Interacts with HSPB8. Interacts with HSPBAP1. Phosphorylated upon exposure to protein kinase C activators and heat shock. Phosphorylation by MAPKAPK2 and MAPKAPK3 in response to stress dissociates HSPB1 from large small heat-shock protein (sHsps) oligomers and impairs its chaperone activity and ability to protect against oxidative stress effectively. Phosphorylation by MAPKAPK5 in response to PKA stimulation induces F-actin rearrangement.

The protein localises to the cytoplasm. The protein resides in the nucleus. Its subcellular location is the cytoskeleton. It localises to the spindle. In terms of biological role, small heat shock protein which functions as a molecular chaperone probably maintaining denatured proteins in a folding-competent state. Plays a role in stress resistance and actin organization. Through its molecular chaperone activity may regulate numerous biological processes including the phosphorylation and the axonal transport of neurofilament proteins. The chain is Heat shock protein beta-1 (HSPB1) from Canis lupus familiaris (Dog).